A 116-amino-acid chain; its full sequence is Outer membrane protein assembly factor BamE (116 aa).

Positions 1–22 (MITMRCKMLTAAAVMLAMLTAG) are cleaved as a signal peptide. The N-palmitoyl cysteine moiety is linked to residue cysteine 23. Cysteine 23 is lipidated: S-diacylglycerol cysteine.

This sequence belongs to the BamE family. As to quaternary structure, part of the Bam complex, which is composed of the outer membrane protein BamA, and four lipoproteins BamB, BamC, BamD and BamE.

It localises to the cell outer membrane. In terms of biological role, part of the outer membrane protein assembly complex, which is involved in assembly and insertion of beta-barrel proteins into the outer membrane. The chain is Outer membrane protein assembly factor BamE from Yersinia pestis.